The sequence spans 410 residues: BTB/POZ and MATH domain-containing protein 5 (410 aa).

The interval Met-1–Thr-24 is disordered. The region spanning Asn-28–Val-162 is the MATH domain. The BTB domain maps to Ser-198–Val-264.

The protein belongs to the Tdpoz family. As to quaternary structure, heterodimer with BPM1 and BPM3. Interacts with RAP2-4. Binds to MYB56 at the promoter of FLOWERING LOCUS T (FT). As to expression, ubiquitous.

The protein localises to the nucleus. The protein resides in the cytoplasm. The protein operates within protein modification; protein ubiquitination. May act as a substrate-specific adapter of an E3 ubiquitin-protein ligase complex (CUL3-RBX1-BTB) which mediates the ubiquitination and subsequent proteasomal degradation of target proteins. This Arabidopsis thaliana (Mouse-ear cress) protein is BTB/POZ and MATH domain-containing protein 5 (BPM5).